A 50-amino-acid chain; its full sequence is Sperm protamine P1 (50 aa).

2 disulfides stabilise this stretch: cysteine 7/cysteine 15 and cysteine 38/cysteine 46.

It belongs to the protamine P1 family. In terms of assembly, cross-linked by interchain disulfide bonds around the DNA-helix. Testis.

The protein localises to the nucleus. It localises to the chromosome. In terms of biological role, protamines substitute for histones in the chromatin of sperm during the haploid phase of spermatogenesis. They compact sperm DNA into a highly condensed, stable and inactive complex. The polypeptide is Sperm protamine P1 (PRM1) (Equus caballus (Horse)).